The chain runs to 197 residues: NADH-quinone oxidoreductase subunit I 2 (197 aa).

4Fe-4S ferredoxin-type domains are found at residues 42-71 (GVIGLFEENCTVCMLCARECPDWCIYIDSH) and 91-120 (DRFAIDFALCMYCGICIEVCPFDALFWSPE). The [4Fe-4S] cluster site is built by Cys-51, Cys-54, Cys-57, Cys-61, Cys-100, Cys-103, Cys-106, and Cys-110. A disordered region spans residues 147–197 (APPALDPGAEEPKELAAARKAADKLAAQQQPDQPGPDHPGQPDESGQEGRT). A compositionally biased stretch (basic and acidic residues) spans 156–169 (EEPKELAAARKAAD).

This sequence belongs to the complex I 23 kDa subunit family. As to quaternary structure, NDH-1 is composed of 14 different subunits. Subunits NuoA, H, J, K, L, M, N constitute the membrane sector of the complex. The cofactor is [4Fe-4S] cluster.

It localises to the cell membrane. The enzyme catalyses a quinone + NADH + 5 H(+)(in) = a quinol + NAD(+) + 4 H(+)(out). In terms of biological role, NDH-1 shuttles electrons from NADH, via FMN and iron-sulfur (Fe-S) centers, to quinones in the respiratory chain. The immediate electron acceptor for the enzyme in this species is believed to be ubiquinone. Couples the redox reaction to proton translocation (for every two electrons transferred, four hydrogen ions are translocated across the cytoplasmic membrane), and thus conserves the redox energy in a proton gradient. The polypeptide is NADH-quinone oxidoreductase subunit I 2 (Streptomyces coelicolor (strain ATCC BAA-471 / A3(2) / M145)).